Reading from the N-terminus, the 746-residue chain is Protein zyg-11 homolog (746 aa).

LRR repeat units lie at residues 185–209, 216–241, and 265–289; these read LPRL…GLRS, MHQL…VLQH, and LPQL…AFVE.

This sequence belongs to the zyg-11 family.

Its function is as follows. Serves as substrate adapter subunit in an E3 ubiquitin ligase complex zyg11-cul2-elongin BC. Targets substrates bearing N-terminal glycine degrons for proteasomal degradation. This Danio rerio (Zebrafish) protein is Protein zyg-11 homolog (zyg11).